We begin with the raw amino-acid sequence, 829 residues long: Periplasmic nitrate reductase (829 aa).

Residues 1-30 (MKMTRRAFVKANAAASAAAVAGITLPASAA) constitute a signal peptide (tat-type signal). The 4Fe-4S Mo/W bis-MGD-type domain maps to 41–97 (ITWDKAPCRFCGTGCSVLVGTQNGKVVATQGDPEAPVNKGLNCIKGYFLSKIMYGQD). 4 residues coordinate [4Fe-4S] cluster: C48, C51, C55, and C83. Mo-bis(molybdopterin guanine dinucleotide) contacts are provided by residues K85, Q152, N177, C181, 214-221 (WGSNMAEM), 245-249 (STYYH), 264-266 (QSD), M374, Q378, N484, 510-511 (SD), K533, D560, and 718-727 (TGRVLEHWHT). F794 contacts substrate. The Mo-bis(molybdopterin guanine dinucleotide) site is built by N802 and K819.

Belongs to the prokaryotic molybdopterin-containing oxidoreductase family. NasA/NapA/NarB subfamily. As to quaternary structure, component of the periplasmic nitrate reductase NapAB complex composed of NapA and NapB. Requires [4Fe-4S] cluster as cofactor. Mo-bis(molybdopterin guanine dinucleotide) is required as a cofactor. Post-translationally, predicted to be exported by the Tat system. The position of the signal peptide cleavage has not been experimentally proven.

Its subcellular location is the periplasm. It catalyses the reaction 2 Fe(II)-[cytochrome] + nitrate + 2 H(+) = 2 Fe(III)-[cytochrome] + nitrite + H2O. Catalytic subunit of the periplasmic nitrate reductase complex NapAB. Receives electrons from NapB and catalyzes the reduction of nitrate to nitrite. This is Periplasmic nitrate reductase from Vibrio vulnificus (strain CMCP6).